The primary structure comprises 398 residues: ATP-dependent RNA helicase eIF4A (398 aa).

The Q motif signature appears at 25 to 53 (DSFDTMNLKPELLRGVYAYGFERPSAIQQ). In terms of domain architecture, Helicase ATP-binding spans 56 to 226 (IMPVIKGHDV…TKFMRDPVRI (171 aa)). ATP is bound at residue 69–76 (AQSGTGKT). The DEAD box signature appears at 174 to 177 (DEAD). Residues 237-398 (GIKQFYIAVE…EMPMNVADLI (162 aa)) form the Helicase C-terminal domain.

This sequence belongs to the DEAD box helicase family. eIF4A subfamily. As to quaternary structure, component of the eIF4F complex, which composition varies with external and internal environmental conditions. It is composed of at least eIF4A, eIF4E and eIF4G.

It localises to the cytoplasm. It catalyses the reaction ATP + H2O = ADP + phosphate + H(+). Its function is as follows. ATP-dependent RNA helicase which is a subunit of the eIF4F complex involved in cap recognition and is required for mRNA binding to ribosome. In the current model of translation initiation, eIF4A unwinds RNA secondary structures in the 5'-UTR of mRNAs which is necessary to allow efficient binding of the small ribosomal subunit, and subsequent scanning for the initiator codon. This is ATP-dependent RNA helicase eIF4A (tif1) from Sclerotinia sclerotiorum (strain ATCC 18683 / 1980 / Ss-1) (White mold).